The sequence spans 233 residues: 2,3,4,5-tetrahydropyridine-2,6-dicarboxylate N-acetyltransferase (233 aa).

The protein belongs to the transferase hexapeptide repeat family. DapH subfamily.

The enzyme catalyses (S)-2,3,4,5-tetrahydrodipicolinate + acetyl-CoA + H2O = L-2-acetamido-6-oxoheptanedioate + CoA. Its pathway is amino-acid biosynthesis; L-lysine biosynthesis via DAP pathway; LL-2,6-diaminopimelate from (S)-tetrahydrodipicolinate (acetylase route): step 1/3. In terms of biological role, catalyzes the transfer of an acetyl group from acetyl-CoA to tetrahydrodipicolinate. In Oenococcus oeni (strain ATCC BAA-331 / PSU-1), this protein is 2,3,4,5-tetrahydropyridine-2,6-dicarboxylate N-acetyltransferase.